The sequence spans 526 residues: NAD(P)H-quinone oxidoreductase subunit 2 (526 aa).

14 helical membrane passes run isoleucine 16 to leucine 36, tryptophan 43 to tryptophan 63, leucine 80 to valine 100, leucine 110 to alanine 130, leucine 133 to tyrosine 153, leucine 168 to leucine 188, leucine 212 to valine 232, proline 246 to isoleucine 266, tryptophan 280 to leucine 300, leucine 308 to threonine 328, isoleucine 336 to phenylalanine 356, leucine 380 to glycine 400, isoleucine 402 to isoleucine 422, and valine 468 to phenylalanine 488.

This sequence belongs to the complex I subunit 2 family. NDH-1 can be composed of about 15 different subunits; different subcomplexes with different compositions have been identified which probably have different functions.

Its subcellular location is the cellular thylakoid membrane. The catalysed reaction is a plastoquinone + NADH + (n+1) H(+)(in) = a plastoquinol + NAD(+) + n H(+)(out). It catalyses the reaction a plastoquinone + NADPH + (n+1) H(+)(in) = a plastoquinol + NADP(+) + n H(+)(out). In terms of biological role, NDH-1 shuttles electrons from an unknown electron donor, via FMN and iron-sulfur (Fe-S) centers, to quinones in the respiratory and/or the photosynthetic chain. The immediate electron acceptor for the enzyme in this species is believed to be plastoquinone. Couples the redox reaction to proton translocation, and thus conserves the redox energy in a proton gradient. Cyanobacterial NDH-1 also plays a role in inorganic carbon-concentration. The sequence is that of NAD(P)H-quinone oxidoreductase subunit 2 from Trichodesmium erythraeum (strain IMS101).